The sequence spans 507 residues: MKESQVYLERARSRQQHFLYSLIFREYIYGLAYSHNLNRSLFVENVGYDNKYSLLIVKRLITRMYQQNHLIISANDSNKNSFWGYNNNYYSQIISEGFSIVVEIPFFLQLSSSLEEAEIIKYYKNFRSIHSIFPFLEDKFTYLNYVSDIRIPYPIHLEILVQILRYWVKDAPFFHLLRLFLCNWNSFITTKKKKSISTFSKINPRFFLFLYNFYVCEYESIFVFLRNQSSHLPLKSFRVFFERIFFYAKREHLVKLFAKDFLYTLTLTFFKDPNIHYVRYQGKCILASKNAPFLMDKWKHYFIHLWQCFFDVWSQPRTININPLSEHSFKLLGYFSNVRLNRSVVRSQMLQNTFLIEIVIKKIDIIVPILPLIRSLAKAKFCNVLGQPISKPVWADSSDFDIIDRFLRISRNLSHYYKGSSKKKSLYRIKYILRLSCIKTLACKHKSTVRAFLKRSGSEEFLQEFFTEEEEILSLIFPRDSSTLERLSRNRIWYLDILFSNDLVHDE.

Belongs to the intron maturase 2 family. MatK subfamily.

Its subcellular location is the plastid. It is found in the chloroplast. In terms of biological role, usually encoded in the trnK tRNA gene intron. Probably assists in splicing its own and other chloroplast group II introns. The polypeptide is Maturase K (Lens culinaris (Lentil)).